The primary structure comprises 341 residues: Anthranilate phosphoribosyltransferase (341 aa).

Residues Gly79, 82 to 83, Thr87, 89 to 92, 107 to 115, and Ser119 each bind 5-phospho-alpha-D-ribose 1-diphosphate; these read GD, NIST, and KHGNRAVSS. Gly79 serves as a coordination point for anthranilate. A Mg(2+)-binding site is contributed by Ser91. Asn110 lines the anthranilate pocket. Position 165 (Arg165) interacts with anthranilate. Mg(2+) contacts are provided by Asp224 and Glu225.

Belongs to the anthranilate phosphoribosyltransferase family. Homodimer. The cofactor is Mg(2+).

It catalyses the reaction N-(5-phospho-beta-D-ribosyl)anthranilate + diphosphate = 5-phospho-alpha-D-ribose 1-diphosphate + anthranilate. Its pathway is amino-acid biosynthesis; L-tryptophan biosynthesis; L-tryptophan from chorismate: step 2/5. In terms of biological role, catalyzes the transfer of the phosphoribosyl group of 5-phosphorylribose-1-pyrophosphate (PRPP) to anthranilate to yield N-(5'-phosphoribosyl)-anthranilate (PRA). This is Anthranilate phosphoribosyltransferase from Bacillus mycoides (strain KBAB4) (Bacillus weihenstephanensis).